We begin with the raw amino-acid sequence, 443 residues long: Structure-specific endonuclease subunit SLX1 homolog (443 aa).

Residues 1–27 (METFILSSDSDDDSGPPPSKRRTIEGI) are disordered. The region spanning 171 to 258 (EFYGVYCLIS…PLVSKSLKEK (88 aa)) is the GIY-YIG domain. An SLX1-type zinc finger spans residues 340 to 395 (CRICGKDIEKLWSLVRCISATCPSHFHSKCLSENGLKLKNEHVDHVYPLKANCPTC).

This sequence belongs to the SLX1 family. Forms a heterodimer with him-18/slx-4. Requires a divalent metal cation as cofactor.

It is found in the nucleus. Catalytic subunit of a heterodimeric structure-specific endonuclease that resolves DNA secondary structures generated during DNA repair and recombination. Has endonuclease activity towards branched DNA substrates, introducing single-strand cuts in duplex DNA close to junctions with ss-DNA (Potential). Has a preference for replication forks over 5' flap structures or Holliday junctions and shows much lower activity toward 3' flap structures. Required for proper crossover distribution through inhibition of crossover formation at the central region of chromosomes. This is Structure-specific endonuclease subunit SLX1 homolog from Caenorhabditis elegans.